Reading from the N-terminus, the 218-residue chain is Cytochrome b6 (218 aa).

The chain crosses the membrane as a helical span at residues 35–55 (IFYCLGGITLVCFLIQFATGF). Cys38 contacts heme c. Residues His89 and His103 each contribute to the heme b site. The next 3 membrane-spanning stretches (helical) occupy residues 93-113 (ASMM…TGGF), 119-139 (LTWV…VTGY), and 189-209 (LHTF…FLMI). Heme b-binding residues include His190 and His205.

It belongs to the cytochrome b family. PetB subfamily. The 4 large subunits of the cytochrome b6-f complex are cytochrome b6, subunit IV (17 kDa polypeptide, PetD), cytochrome f and the Rieske protein, while the 4 small subunits are PetG, PetL, PetM and PetN. The complex functions as a dimer. Requires heme b as cofactor. The cofactor is heme c.

Its subcellular location is the cellular thylakoid membrane. Component of the cytochrome b6-f complex, which mediates electron transfer between photosystem II (PSII) and photosystem I (PSI), cyclic electron flow around PSI, and state transitions. The sequence is that of Cytochrome b6 from Prochlorococcus marinus (strain MIT 9211).